A 273-amino-acid chain; its full sequence is Endochitinase EP3 (273 aa).

The signal sequence occupies residues 1–28; that stretch reads MLTPTISKSISLVTILLVLQAFSNTTKA. A glycan (N-linked (GlcNAc...) asparagine) is linked at asparagine 24. A Chitin-binding type-1 domain is found at 29-63; the sequence is QNCGCSSELCCSQFGFCGNTSDYCGVGCQQGPCFA. 4 cysteine pairs are disulfide-bonded: cysteine 31-cysteine 39, cysteine 33-cysteine 45, cysteine 38-cysteine 52, and cysteine 56-cysteine 61. A glycan (N-linked (GlcNAc...) asparagine) is linked at asparagine 47. A catalytic region spans residues 70–273; it reads VSVAEIVTQE…GVDPGNNLTC (204 aa). Catalysis depends on glutamate 136, which acts as the Proton donor. N-linked (GlcNAc...) asparagine glycans are attached at residues asparagine 157 and asparagine 270.

This sequence belongs to the glycosyl hydrolase 19 family. Chitinase class I subfamily. As to expression, expressed in cells surrounding embryos, stems, seedlings, pollen, roots, shoots, inflorescence, flowers, siliques and leaves. Present in seedpods and seed embryos, but not in roots, inflorescence stems, leaves and flowers.

The catalysed reaction is Random endo-hydrolysis of N-acetyl-beta-D-glucosaminide (1-&gt;4)-beta-linkages in chitin and chitodextrins.. Its function is as follows. Probably involved in hypersensitive reaction upon Xanthomonas campestris infection. This Arabidopsis thaliana (Mouse-ear cress) protein is Endochitinase EP3.